Reading from the N-terminus, the 369-residue chain is UPF0284 protein cce_1085 (369 aa).

The protein belongs to the UPF0284 family.

This chain is UPF0284 protein cce_1085, found in Crocosphaera subtropica (strain ATCC 51142 / BH68) (Cyanothece sp. (strain ATCC 51142)).